Consider the following 537-residue polypeptide: Cytochrome P450 monooxygenase AOL_s00215g282 (537 aa).

The helical transmembrane segment at 9–29 threads the bilayer; sequence ATVVLCGSIVTVSIAYVIFVV. Residue Asn126 is glycosylated (N-linked (GlcNAc...) asparagine). Cys451 contacts heme.

It belongs to the cytochrome P450 family. Heme serves as cofactor.

It is found in the membrane. The protein operates within secondary metabolite biosynthesis; terpenoid biosynthesis. Cytochrome P450 monooxygenase; part of the gene cluster that mediates the biosynthesis of sesquiterpenyl epoxy-cyclohexenoids (SECs) such as anthrobotrisins and arthrosporols, metabolites that possess a novel hybrid carbon skeleton consisting of a polyketide-derived epoxycyclohexenol combined with a terpenoid-derived monocyclic sesquiterpenol substructure (PKS-PTS hybrid). The SEC pathway plays an important role for fungal soil colonization via decreasing fungal nematode-capturing ability. Within the pathway, the cytochrome P450 monooxygenase AOL_s00215g282 acts as a m-cresol hydrolase that converts m-cresol to toluquinol. The pathway begins with the biosynthesis of 6-methylsalicylic acid (6-MSA), the first precursor of the polyketide-derived epoxycyclohexenol in arthrosporols, by the polyketide synthase (PKS) AOL_s00215g283 via condensation of 1 acetate and 3 malonate units. The 6-methylsalicylic acid decarboxylase AOL_s00215g281 then catalyzes the decarboxylation of 6-methylsalicylic acid to yield m-cresol. The cytochrome P450 monooxygenase AOL_s00215g282 further oxidizes m-cresol to yield toluquinol. With the assistance of the oxidoreductase AOL_s00215g277, the polyprenyl transferase AOL_s00215g276 catalyzes the farnesylation of toluquinol to produce farnesyl hydroquinone, the hybrid precursor for biosynthesis of SECs. Farnesyl hydroquinone undergoes epoxidation and then subsequent dehydrogenation to form farnesyl epoxy-quinone, the first and simplest SEC. The cytochrome P450 monooxygenase AOL_s00215g278 and the FAD-dependent monooxygenase AOL_s00215g279 might be involved in the oxygenation of the phenol moiety, most likely in the epoxy formation. The cytochrome P450 monooxygenases AOL_s00215g274 and AOL_s00215g280 are involved in specific regional ketone reductions at respectively C-4 and C-1 of farnesyl epoxy-quinone PubMed:33823587. This is Cytochrome P450 monooxygenase AOL_s00215g282 from Arthrobotrys oligospora (strain ATCC 24927 / CBS 115.81 / DSM 1491) (Nematode-trapping fungus).